We begin with the raw amino-acid sequence, 1024 residues long: Beta-galactosidase (1024 aa).

Substrate contacts are provided by N103 and D202. D202 contacts Na(+). 3 residues coordinate Mg(2+): E417, H419, and E462. Substrate-binding positions include E462 and 538-541 (EYAH). Residue E462 is the Proton donor of the active site. E538 acts as the Nucleophile in catalysis. N598 serves as a coordination point for Mg(2+). 2 residues coordinate Na(+): F602 and N605. 2 residues coordinate substrate: N605 and W1000.

This sequence belongs to the glycosyl hydrolase 2 family. In terms of assembly, homotetramer. The cofactor is Mg(2+). It depends on Na(+) as a cofactor.

It carries out the reaction Hydrolysis of terminal non-reducing beta-D-galactose residues in beta-D-galactosides.. This is Beta-galactosidase from Escherichia coli O6:H1 (strain CFT073 / ATCC 700928 / UPEC).